Here is a 319-residue protein sequence, read N- to C-terminus: COP9 signalosome complex subunit 6 (319 aa).

In terms of domain architecture, MPN spans 33–166 (VALHPLVILN…VSVYESVIDI (134 aa)).

Belongs to the peptidase M67A family. CSN6 subfamily. Component of the CSN complex, probably composed of cops1, cops2, cops3, cops4, cops5, cops6, cops7, cops8 and cops9.

The protein localises to the cytoplasm. It localises to the nucleus. Functionally, component of the COP9 signalosome complex (CSN), a complex involved in various cellular and developmental processes. The CSN complex is an essential regulator of the ubiquitin (Ubl) conjugation pathway by mediating the deneddylation of the cullin subunits of E3 ligase complexes, leading to modify the Ubl ligase activity. The chain is COP9 signalosome complex subunit 6 (cops6) from Xenopus tropicalis (Western clawed frog).